Consider the following 428-residue polypeptide: Immunoglobulin superfamily containing leucine-rich repeat protein (428 aa).

Residues 1–18 (MRALCLLCWAVLLNLVRA) form the signal peptide. The LRRNT domain occupies 19–50 (CPEPCDCGEKYGFQIADCAYRDLEGVPPGFPA). Asn51 carries an N-linked (GlcNAc...) asparagine glycan. LRR repeat units lie at residues 51-72 (NVTT…AFRE), 75-98 (LLQS…APLS), 99-122 (HLKS…HNLS), 123-144 (ALQL…AFSS), and 147-168 (ALRS…TFAP). The LRRCT domain occupies 180-231 (NPFDCTCGIVWFKTWALASAVSIPEQDNIACTTPHVLKGIPLGRLPPLPCSA). Positions 232-343 (PSVQLSYQPS…GSAESSVNVA (112 aa)) constitute an Ig-like domain. An intrachain disulfide couples Cys257 to Cys327. Residue Asn309 is glycosylated (N-linked (GlcNAc...) asparagine).

As to expression, detected in thyroid, heart, retina and spinal cord.

It localises to the secreted. This Mus musculus (Mouse) protein is Immunoglobulin superfamily containing leucine-rich repeat protein (Islr).